Here is a 368-residue protein sequence, read N- to C-terminus: Repressor ROX1 (368 aa).

Residues I10–K83 constitute a DNA-binding region (HMG box). 2 disordered regions span residues I100–L121 and S242–L273. A compositionally biased stretch (low complexity) spans Q102–L121.

It is found in the nucleus. Functionally, transcription factor that represses the expression of HEM13, COX5B, ANB1, CYC7 or AAC3 (hypoxic function). Binds to the DNA sequence 5'-RRRTAACAAGAG-3'. The polypeptide is Repressor ROX1 (ROX1) (Saccharomyces cerevisiae (strain ATCC 204508 / S288c) (Baker's yeast)).